The primary structure comprises 354 residues: Non-structural protein NS2 (354 aa).

2 disordered regions span residues 163 to 196 (NERESAPRLQVQSVASREESRWMDDDEAKVDNEA) and 229 to 269 (DERD…THIT). 2 stretches are compositionally biased toward basic and acidic residues: residues 178 to 196 (SREESRWMDDDEAKVDNEA) and 237 to 249 (DERGDEEQVKTLS). The span at 250–260 (DDDDQGEDASD) shows a compositional bias: acidic residues.

In terms of biological role, single-stranded RNA-binding protein. This is Non-structural protein NS2 (Segment-8) from Bluetongue virus 17 (isolate USA) (BTV 17).